The following is a 440-amino-acid chain: UDP-glucose 6-dehydrogenase YwqF (440 aa).

NAD(+) contacts are provided by residues 2-19 (NITV…GVSL), Val-11, Asp-30, Lys-35, Thr-121, and Glu-155. Substrate is bound by residues 151–155 (EFLRE), Lys-204, Asn-208, 249–253 (FLKAG), and Gly-257. Cys-260 acts as the Nucleophile in catalysis. Lys-263 provides a ligand contact to NAD(+). Lys-320 contributes to the substrate binding site. Residue Arg-327 participates in NAD(+) binding.

This sequence belongs to the UDP-glucose/GDP-mannose dehydrogenase family. In terms of processing, phosphorylated on tyrosine residue(s). Phosphorylated by YwqD and dephosphorylated by YwqE in vitro.

The protein resides in the cytoplasm. It carries out the reaction UDP-alpha-D-glucose + 2 NAD(+) + H2O = UDP-alpha-D-glucuronate + 2 NADH + 3 H(+). It functions in the pathway nucleotide-sugar biosynthesis; UDP-alpha-D-glucuronate biosynthesis; UDP-alpha-D-glucuronate from UDP-alpha-D-glucose: step 1/1. Its activity is regulated as follows. Competitively inhibited by UDP-glucose. Activated by phosphorylation, which may increase affinity for NAD(+); inhibited by dephosphorylation. Its function is as follows. Catalyzes the conversion of UDP-glucose into UDP-glucuronate, one of the precursors of teichuronic acid. In Bacillus subtilis (strain 168), this protein is UDP-glucose 6-dehydrogenase YwqF (ywqF).